The sequence spans 153 residues: Salivary C-type lectin 1 (153 aa).

Positions 1 to 19 (MIFSLYLIVAISLADLTAA) are cleaved as a signal peptide. Residues 26-151 (KNRFCFPNVV…CSSTRRFVCE (126 aa)) enclose the C-type lectin domain. 2 cysteine pairs are disulfide-bonded: cysteine 45/cysteine 150 and cysteine 122/cysteine 142.

Ca(2+) is required as a cofactor. In terms of tissue distribution, expressed in female salivary gland. Not detected or low-level expression in female midgut and fat body.

The protein resides in the secreted. Functionally, salivary protein with carbohydrate-binding activity; exibits high affinity for D-mannose. Agglutinates host erythrocytes. Probably participates in mosquito innate immune responses to prevent microorganism multiplication in sugar and blood meals. (Microbial infection) Agglutinates Staphylococcus aureus in vitro. In terms of biological role, (Microbial infection) Agglutinates Candida albicans in vitro. Its function is as follows. (Microbial infection) Does not agglutinate Escherichia coli in vitro. This chain is Salivary C-type lectin 1, found in Aedes albopictus (Asian tiger mosquito).